The following is a 379-amino-acid chain: MHWIWLVLLLAVVGAIVGAATNALAIRMLFRPHRAYSIGKWQLPFTPGLLPRRQKELAVQLGNIVANHLLTAEGLGKKFGSTAFAAELTNWLKKQLASWLRSERTVESILKPLFQADIGREHLVVQSKSWLKDRLKRYLQKNKEVPIKSVVPQELQDRLTDWLPEASALLLKRATAYIDSEEGEQRIGAMVRQFLTTKGKVGSMVSMFFSADKLTEYVLPEIKKFLHDEQTKETVQSLLQTEWHRMLNRPLASFQAENYVDQFVDKAAEELEGKIPVLNWYNAPLSTWTTPYAEPLVERGVPVIVGMVTVYMEQHIADILSKLRLEEVIEEQVASFSMAHLEKLIMNITRRELHMITLLGGLIGGIVGLIQAVIVHFFY.

2 helical membrane passes run 1–21 (MHWIWLVLLLAVVGAIVGAAT) and 358–378 (LLGGLIGGIVGLIQAVIVHFF).

The protein belongs to the UPF0754 family.

It localises to the cell membrane. The protein is UPF0754 membrane protein ABC1518 of Shouchella clausii (strain KSM-K16) (Alkalihalobacillus clausii).